The primary structure comprises 340 residues: Ketol-acid reductoisomerase (NADP(+)) (340 aa).

Residues 1–182 form the KARI N-terminal Rossmann domain; sequence MRVYYDRDCD…GGGRSGIIET (182 aa). NADP(+) contacts are provided by residues 24 to 27, R48, S51, S53, and 83 to 86; these read YGSQ and DELQ. H108 is a catalytic residue. Residue G134 coordinates NADP(+). Positions 183–329 constitute a KARI C-terminal knotted domain; sequence NFREECETDL…ETLRGMMPWI (147 aa). Mg(2+)-binding residues include D191, E195, E227, and E231. A substrate-binding site is contributed by S252.

This sequence belongs to the ketol-acid reductoisomerase family. Mg(2+) serves as cofactor.

The enzyme catalyses (2R)-2,3-dihydroxy-3-methylbutanoate + NADP(+) = (2S)-2-acetolactate + NADPH + H(+). It catalyses the reaction (2R,3R)-2,3-dihydroxy-3-methylpentanoate + NADP(+) = (S)-2-ethyl-2-hydroxy-3-oxobutanoate + NADPH + H(+). Its pathway is amino-acid biosynthesis; L-isoleucine biosynthesis; L-isoleucine from 2-oxobutanoate: step 2/4. It participates in amino-acid biosynthesis; L-valine biosynthesis; L-valine from pyruvate: step 2/4. Its function is as follows. Involved in the biosynthesis of branched-chain amino acids (BCAA). Catalyzes an alkyl-migration followed by a ketol-acid reduction of (S)-2-acetolactate (S2AL) to yield (R)-2,3-dihydroxy-isovalerate. In the isomerase reaction, S2AL is rearranged via a Mg-dependent methyl migration to produce 3-hydroxy-3-methyl-2-ketobutyrate (HMKB). In the reductase reaction, this 2-ketoacid undergoes a metal-dependent reduction by NADPH to yield (R)-2,3-dihydroxy-isovalerate. The polypeptide is Ketol-acid reductoisomerase (NADP(+)) (Roseobacter denitrificans (strain ATCC 33942 / OCh 114) (Erythrobacter sp. (strain OCh 114))).